The chain runs to 195 residues: Imidazoleglycerol-phosphate dehydratase (195 aa).

It belongs to the imidazoleglycerol-phosphate dehydratase family.

The protein resides in the cytoplasm. The catalysed reaction is D-erythro-1-(imidazol-4-yl)glycerol 3-phosphate = 3-(imidazol-4-yl)-2-oxopropyl phosphate + H2O. The protein operates within amino-acid biosynthesis; L-histidine biosynthesis; L-histidine from 5-phospho-alpha-D-ribose 1-diphosphate: step 6/9. The chain is Imidazoleglycerol-phosphate dehydratase from Aromatoleum aromaticum (strain DSM 19018 / LMG 30748 / EbN1) (Azoarcus sp. (strain EbN1)).